The chain runs to 408 residues: Tryptophan--tRNA ligase, chloroplastic/mitochondrial (408 aa).

The N-terminal 52 residues, 1–52, are a transit peptide targeting the chloroplast and mitochondrion; sequence MGHATSLSHFLILSSSRFSRLGSLTRLLSKPTSLSGSFSSISVTGQGFRCCC. Ser53 is subject to N-acetylserine. ATP contacts are provided by residues Gln72 and 78 to 81; that span reads HLGN. Positions 73 to 81 match the 'HIGH' region motif; that stretch reads PTGSVHLGN. Asp197 provides a ligand contact to L-tryptophan. Residues 209–211, Val260, 269–273, and Lys272 contribute to the ATP site; these read GED and KMSKS. Positions 269–273 match the 'KMSKS' region motif; that stretch reads KMSKS.

Belongs to the class-I aminoacyl-tRNA synthetase family.

It is found in the plastid. The protein localises to the chloroplast. The protein resides in the mitochondrion. The catalysed reaction is tRNA(Trp) + L-tryptophan + ATP = L-tryptophyl-tRNA(Trp) + AMP + diphosphate + H(+). The polypeptide is Tryptophan--tRNA ligase, chloroplastic/mitochondrial (Arabidopsis thaliana (Mouse-ear cress)).